We begin with the raw amino-acid sequence, 1181 residues long: Putative primase (1181 aa).

Residues 1141–1181 (RSHSTMVEHDMDDDESTNKKQELEEEDEECIDIDEYNNERF) form a disordered region. Over residues 1163–1181 (LEEEDEECIDIDEYNNERF) the composition is skewed to acidic residues.

It belongs to the eukaryotic-type primase small subunit family.

In terms of biological role, synthesizes small RNA primers for the Okazaki fragments on both template strands at replication forks during viral DNA synthesis. This chain is Putative primase, found in Magallana gigas (Pacific oyster).